We begin with the raw amino-acid sequence, 402 residues long: NADH-quinone oxidoreductase subunit D (402 aa).

This sequence belongs to the complex I 49 kDa subunit family. NDH-1 is composed of 14 different subunits. Subunits NuoB, C, D, E, F, and G constitute the peripheral sector of the complex.

The protein resides in the cell inner membrane. It carries out the reaction a quinone + NADH + 5 H(+)(in) = a quinol + NAD(+) + 4 H(+)(out). Its function is as follows. NDH-1 shuttles electrons from NADH, via FMN and iron-sulfur (Fe-S) centers, to quinones in the respiratory chain. The immediate electron acceptor for the enzyme in this species is believed to be ubiquinone. Couples the redox reaction to proton translocation (for every two electrons transferred, four hydrogen ions are translocated across the cytoplasmic membrane), and thus conserves the redox energy in a proton gradient. The chain is NADH-quinone oxidoreductase subunit D from Cereibacter sphaeroides (strain ATCC 17025 / ATH 2.4.3) (Rhodobacter sphaeroides).